A 205-amino-acid chain; its full sequence is Latherin (205 aa).

Residues Cys133 and Cys176 are joined by a disulfide bond.

This sequence belongs to the BPI/LBP/Plunc superfamily. Plunc family. Monomer.

The protein resides in the secreted. Functionally, major protein in sweat, has surfactant properties. The protein is Latherin (LATH) of Equus quagga burchellii (Burchell's zebra).